The following is a 132-amino-acid chain: Cytochrome b5 (132 aa).

Residues 2–78 enclose the Cytochrome b5 heme-binding domain; it reads GKIFTLAEVA…LDEYYVGDID (77 aa). Heme contacts are provided by His37 and His61. The helical transmembrane segment at 104 to 124 threads the bilayer; sequence FVIKLLQFLVPLVILAGAIGI.

Belongs to the cytochrome b5 family.

Its subcellular location is the endoplasmic reticulum membrane. The protein localises to the microsome membrane. Membrane bound hemoprotein which function as an electron carrier for several membrane bound oxygenases. This chain is Cytochrome b5, found in Borago officinalis (Bourrache).